The sequence spans 249 residues: Zinc finger protein CG30 (249 aa).

The segment at 8–66 adopts an RING-type zinc-finger fold; sequence CHICCSVGEIKNYFLQPVDAITILPIVELHTCRHQLCVMCVRKIAQRGRDKRVECPMCR.

This chain is Zinc finger protein CG30 (CG30), found in Orgyia pseudotsugata (Douglas-fir tussock moth).